The following is a 1493-amino-acid chain: Myosin-13 (1493 aa).

The 50-residue stretch at 18-67 folds into the Myosin N-terminal SH3-like domain; sequence KVGSIVWVQDPEEAWIDGEVVEVNGEDIKVQCTSGKTVVAKGSNTYPKDM. One can recognise a Myosin motor domain in the interval 72–741; that stretch reads SGVDDMTTLA…QMAELDDRRT (670 aa). ATP-binding positions include 166–173 and 219–227; these read GESGAGKT and NNNSSRFGK. 4 actin-binding regions span residues 504-538, 540-563, 598-622, and 622-644; these read LIEKKRGGIIALLDEACMFPRSTHKTFSQKLYETL, DNKYFSKPKLSRTDFTICHYAGDV, FPPLVEDANKQSKFSSIASQFKQQL, and LASLIEGLNTTEPHYIRCVKPNN. 6 IQ domains span residues 744-773, 767-796, 792-821, 813-842, 836-865, and 859-888; these read LGRAACIIQWKFRSYLTRQSFIMLRNAAIN, LRNAAINIQAVYRGQVARYRFENLRREAAA, REAAALKIQRALRIHLDRKRSYIEAVVTVQ, YIEAVVTVQSGLRGMAARVVLRRKTKATTV, KTKATTVIQSHCRRLRAELHYKKLKKAAIT, and LKKAAITTQSAWRARLARKELRKLKTDARD. Residues 889–1057 are a coiled coil; the sequence is TVVLQAAKSM…NFLKESVLTT (169 aa). The tract at residues 1085–1114 is disordered; the sequence is QLSGAEFTTPPRIQESGSDTKSRGSHIDPQ. Residues 1102–1114 are compositionally biased toward basic and acidic residues; sequence SDTKSRGSHIDPQ. Positions 1161-1444 constitute a Dilute domain; that stretch reads DRLVQMIGSA…IASMTGVMTD (284 aa).

The protein belongs to the TRAFAC class myosin-kinesin ATPase superfamily. Myosin family. Plant myosin class XI subfamily. In terms of assembly, homodimer.

Its function is as follows. Myosin heavy chain that is required for the cell cycle-regulated transport of various organelles and proteins for their segregation. Functions by binding with its tail domain to receptor proteins on organelles and exerting force with its N-terminal motor domain against actin filaments, thereby transporting its cargo along polarized actin cables. This is Myosin-13 (XI-G) from Arabidopsis thaliana (Mouse-ear cress).